The primary structure comprises 181 residues: Proteinase inhibitor A (181 aa).

The first 24 residues, M1 to G24, serve as a signal peptide directing secretion. 3 disulfide bridges follow: C67/C113, C134/C143, and C136/C139.

This sequence belongs to the protease inhibitor I3 (leguminous Kunitz-type inhibitor) family.

It is found in the secreted. In terms of biological role, possesses two reactive sites. Inhibits an equimolar amount of trypsin and chymotrypsin simultaneously, and inhibits kallikrein weakly. This is Proteinase inhibitor A from Sagittaria sagittifolia (Arrowhead).